A 320-amino-acid polypeptide reads, in one-letter code: UDP-3-O-acyl-N-acetylglucosamine deacetylase (320 aa).

Positions 92, 251, and 255 each coordinate Zn(2+). The active-site Proton donor is H278.

Belongs to the LpxC family. Zn(2+) serves as cofactor.

It catalyses the reaction a UDP-3-O-[(3R)-3-hydroxyacyl]-N-acetyl-alpha-D-glucosamine + H2O = a UDP-3-O-[(3R)-3-hydroxyacyl]-alpha-D-glucosamine + acetate. It participates in glycolipid biosynthesis; lipid IV(A) biosynthesis; lipid IV(A) from (3R)-3-hydroxytetradecanoyl-[acyl-carrier-protein] and UDP-N-acetyl-alpha-D-glucosamine: step 2/6. Functionally, catalyzes the hydrolysis of UDP-3-O-myristoyl-N-acetylglucosamine to form UDP-3-O-myristoylglucosamine and acetate, the committed step in lipid A biosynthesis. This Psychrobacter cryohalolentis (strain ATCC BAA-1226 / DSM 17306 / VKM B-2378 / K5) protein is UDP-3-O-acyl-N-acetylglucosamine deacetylase.